Consider the following 151-residue polypeptide: Large ribosomal subunit protein uL15 (151 aa).

Belongs to the universal ribosomal protein uL15 family. Part of the 50S ribosomal subunit.

In terms of biological role, binds to the 23S rRNA. This chain is Large ribosomal subunit protein uL15, found in Hyperthermus butylicus (strain DSM 5456 / JCM 9403 / PLM1-5).